The following is a 607-amino-acid chain: Chaperone protein DnaK (607 aa).

Phosphothreonine; by autocatalysis is present on Thr-173. Composition is skewed to basic and acidic residues over residues 490 to 509 (EQNA…RNEA) and 524 to 542 (GDNV…KEAL). Disordered regions lie at residues 490 to 510 (EQNA…NEAD), 524 to 555 (GDNV…EDIK), and 574 to 607 (QQAQ…KDNK). The span at 574 to 587 (QQAQQGDAAGSNQS) shows a compositional bias: polar residues. Basic and acidic residues predominate over residues 595-607 (TEVKDDDDKKDNK).

This sequence belongs to the heat shock protein 70 family.

Acts as a chaperone. This chain is Chaperone protein DnaK, found in Staphylococcus carnosus (strain TM300).